A 111-amino-acid polypeptide reads, in one-letter code: Large ribosomal subunit protein uL22 (111 aa).

The protein belongs to the universal ribosomal protein uL22 family. Part of the 50S ribosomal subunit.

Its function is as follows. This protein binds specifically to 23S rRNA; its binding is stimulated by other ribosomal proteins, e.g. L4, L17, and L20. It is important during the early stages of 50S assembly. It makes multiple contacts with different domains of the 23S rRNA in the assembled 50S subunit and ribosome. In terms of biological role, the globular domain of the protein is located near the polypeptide exit tunnel on the outside of the subunit, while an extended beta-hairpin is found that lines the wall of the exit tunnel in the center of the 70S ribosome. This Polynucleobacter necessarius subsp. necessarius (strain STIR1) protein is Large ribosomal subunit protein uL22.